Here is a 305-residue protein sequence, read N- to C-terminus: MKEFFRLSRKGFTGRDDVDSAQIPDDLWVKCSACRELIYKKQLNDNLKVCPKCGHHMRMSAHEWIGLLDVGSFREMDSNLLPTDPLGFVAADESYATKLAKTQQRTGMTDAVISGVGAISGIRLCIAVADFSFMGASMGSVYGEKMARAAERAAELGIPLLTINTSGGARQQEGVIGLMQMAKITMALTRLAEAGQPHIALLVDPCYGGVTASYPSVADIIIAEPGANIGFAGKRLIEQIMRQKLPAGFQTAEFMLEHGMIDMVVPRSEMRETLARILKHYQQRQAPAAKADLAARRATLPQPIM.

Residues 27–296 enclose the CoA carboxyltransferase N-terminal domain; it reads LWVKCSACRE…PAAKADLAAR (270 aa). 4 residues coordinate Zn(2+): C31, C34, C50, and C53. The C4-type zinc finger occupies 31–53; the sequence is CSACRELIYKKQLNDNLKVCPKC.

This sequence belongs to the AccD/PCCB family. As to quaternary structure, acetyl-CoA carboxylase is a heterohexamer composed of biotin carboxyl carrier protein (AccB), biotin carboxylase (AccC) and two subunits each of ACCase subunit alpha (AccA) and ACCase subunit beta (AccD). It depends on Zn(2+) as a cofactor.

The protein resides in the cytoplasm. It catalyses the reaction N(6)-carboxybiotinyl-L-lysyl-[protein] + acetyl-CoA = N(6)-biotinyl-L-lysyl-[protein] + malonyl-CoA. It functions in the pathway lipid metabolism; malonyl-CoA biosynthesis; malonyl-CoA from acetyl-CoA: step 1/1. Functionally, component of the acetyl coenzyme A carboxylase (ACC) complex. Biotin carboxylase (BC) catalyzes the carboxylation of biotin on its carrier protein (BCCP) and then the CO(2) group is transferred by the transcarboxylase to acetyl-CoA to form malonyl-CoA. The sequence is that of Acetyl-coenzyme A carboxylase carboxyl transferase subunit beta from Chloroflexus aggregans (strain MD-66 / DSM 9485).